The chain runs to 30 residues: Fibrinogen (30 aa).

In terms of assembly, homodimer. Secreted into the hemolymph.

It is found in the secreted. The protein localises to the extracellular space. Clotting protein. This Panulirus interruptus (California spiny lobster) protein is Fibrinogen.